The primary structure comprises 444 residues: D(2) dopamine receptor (444 aa).

Over 1 to 37 (MDPLNLSWYDDDLERQNWSRPFNGSEGKPDRPHYNYY) the chain is Extracellular. Asparagine 5, asparagine 17, and asparagine 23 each carry an N-linked (GlcNAc...) asparagine glycan. The helical transmembrane segment at 38-60 (AMLLTLLIFIIVFGNVLVCMAVS) threads the bilayer. At 61–70 (REKALQTTTN) the chain is on the cytoplasmic side. A helical transmembrane segment spans residues 71-93 (YLIVSLAVADLLVATLVMPWVVY). Over 94–108 (LEVVGEWKFSRIHCD) the chain is Extracellular. A disulfide bridge links cysteine 107 with cysteine 182. Residues 109–130 (IFVTLDVMMCTASILNLCAISI) traverse the membrane as a helical segment. At 131-151 (DRYTAVAMPMLYNTRYSSKRR) the chain is on the cytoplasmic side. Residues 152–172 (VTVMIAIVWVLSFTISCPLLF) traverse the membrane as a helical segment. Residues 173–188 (GLNNTDQNECIIANPA) are Extracellular-facing. A helical transmembrane segment spans residues 189-213 (FVVYSSIVSFYVPFIVTLLVYIKIY). Positions 211–374 (KIYIVLRKRR…SQQKEKKATQ (164 aa)) are interaction with PPP1R9B. The Cytoplasmic segment spans residues 214–374 (IVLRKRRKRV…SQQKEKKATQ (161 aa)). A disordered region spans residues 282–329 (EMLSSTSPPERTRYSPIPPSHHQLTLPDPSHHGLHSNPDSPAKPEKNG). The helical transmembrane segment at 375-396 (MLAIVLGVFIICWLPFFITHIL) threads the bilayer. The Extracellular segment spans residues 397–410 (NIHCDCNIPPVLYS). The cysteines at positions 400 and 402 are disulfide-linked. Residues 411-432 (AFTWLGYVNSAVNPIIYTTFNI) form a helical membrane-spanning segment. Residues 433 to 444 (EFRKAFMKILHC) are Cytoplasmic-facing. Cysteine 444 carries the S-palmitoyl cysteine lipid modification.

It belongs to the G-protein coupled receptor 1 family. As to quaternary structure, forms homo- and heterooligomers with DRD4. The interaction with DRD4 may modulate agonist-induced downstream signaling. Interacts with CADPS and CADPS2. Interacts with GPRASP1, PPP1R9B and CLIC6. Interacts with ARRB2. Interacts with HTR2A. Interacts with DRD1. In terms of assembly, interacts with KCNA2. Post-translationally, palmitoylated. Palmitoylation which is required for proper localization to the plasma membrane and stability of the receptor could be carried on by ZDHHC4, ZDHHC3 and ZDHHC8. In terms of tissue distribution, expressed in retinal hyaloid vessels at postnatal day 6. As to expression, expressed in the pituitary gland, stratum, brain stem and cortex. Expressed in the brain stem.

The protein localises to the cell membrane. Its subcellular location is the golgi apparatus membrane. In terms of biological role, dopamine receptor whose activity is mediated by G proteins which inhibit adenylyl cyclase. Positively regulates postnatal regression of retinal hyaloid vessels via suppression of VEGFR2/KDR activity, downstream of OPN5. The chain is D(2) dopamine receptor (Drd2) from Mus musculus (Mouse).